We begin with the raw amino-acid sequence, 62 residues long: U-stichotoxin-Hau1a (62 aa).

A signal peptide spans 1–21 (MKPAIFLMLFVAMFLISEGEG). A propeptide spanning residues 22 to 31 (FKPKDAPQER) is cleaved from the precursor. A Hydroxyproline modification is found at P36. Disulfide bonds link C41-C53 and C44-C59.

The protein belongs to the Hau1a/HC18/HC19 family.

It localises to the secreted. It is found in the nematocyst. Its function is as follows. Toxin that is lethal to crab. Does not produce the typical symptoms associated with sodium channel toxins in crabs, suggesting that it likely does not act on sodium channels. This Heteractis aurora (Banded sea anemone) protein is U-stichotoxin-Hau1a.